A 236-amino-acid chain; its full sequence is DDCIVVEYYIVTDSAFTKRFKSNSALTKYVTVMFTGVQNLMDTLELGIGVRLLGVTAFNEETEPSFIIDNLISGPPEAFDPDVLITAMSEYYCNHQIGLAKNTDLIFLITARGMGDPREDGTVDINTAGIANSAGVYKPCLKAGVATDDSDYNERVDTLAHESVHLLGSPHDGEGPDQVSLEGSPGAANCPAKAGYIMGNRNDKNKYKFSPCTKKCVEYLLSKPAASCIFEQCSGF.

Residues 4 to 232 enclose the Peptidase M12B domain; the sequence is IVVEYYIVTD…KPAASCIFEQ (229 aa). His-161 is a Zn(2+) binding site. Glu-162 is an active-site residue. Positions 165 and 171 each coordinate Zn(2+).

Belongs to the venom metalloproteinase (M12B) family. The cofactor is Zn(2+). Post-translationally, contains several disulfide bonds. As to expression, expressed by the venom gland.

The protein localises to the secreted. With respect to regulation, inhibited by EDTA. Its function is as follows. Acts as a metalloprotease. Penetrates intact tissue and specifically cleaves the vesicle-associated membrane protein 2 (VAMP2) (part of the SNARE complex) involved in pancreatic secretion, thus disrupting the normal vesicular traffic. The chain is Venom metalloproteinase antarease-like TfasMP_A from Tityus fasciolatus (Central Brazilian scorpion).